Here is a 194-residue protein sequence, read N- to C-terminus: UPF0215 protein TV0037 (194 aa).

This sequence belongs to the UPF0215 family.

The polypeptide is UPF0215 protein TV0037 (Thermoplasma volcanium (strain ATCC 51530 / DSM 4299 / JCM 9571 / NBRC 15438 / GSS1)).